The following is a 35-amino-acid chain: Photosystem II reaction center protein M (35 aa).

The helical transmembrane segment at 7-27 (GFLASLLFVLVPSVFLIVLYI) threads the bilayer.

The protein belongs to the PsbM family. PSII is composed of 1 copy each of membrane proteins PsbA, PsbB, PsbC, PsbD, PsbE, PsbF, PsbH, PsbI, PsbJ, PsbK, PsbL, PsbM, PsbT, PsbX, PsbY, PsbZ, Psb30/Ycf12, peripheral proteins PsbO, CyanoQ (PsbQ), PsbU, PsbV and a large number of cofactors. It forms dimeric complexes.

It localises to the cellular thylakoid membrane. Functionally, one of the components of the core complex of photosystem II (PSII). PSII is a light-driven water:plastoquinone oxidoreductase that uses light energy to abstract electrons from H(2)O, generating O(2) and a proton gradient subsequently used for ATP formation. It consists of a core antenna complex that captures photons, and an electron transfer chain that converts photonic excitation into a charge separation. This subunit is found at the monomer-monomer interface. The polypeptide is Photosystem II reaction center protein M (Synechococcus elongatus (strain ATCC 33912 / PCC 7942 / FACHB-805) (Anacystis nidulans R2)).